The sequence spans 461 residues: Histone acetyltransferase KAT5 (461 aa).

Residues 8 to 65 (IEGCRLPVLRRNQDNEDEWPLAEILSVKDISGRKLFYVHYIDFNKRLDEWVTHERLDL) enclose the Tudor-knot domain. The residue at position 52 (Lys52) is an N6-acetyllysine. Positions 70–168 (FPKKEAKTPT…RMTGSLVSDR (99 aa)) are disordered. 2 positions are modified to phosphoserine: Ser86 and Ser90. The segment covering 90-100 (SPEREVKRKVE) has biased composition (basic and acidic residues). Residues Lys96, Lys98, Lys135, and Lys137 each carry the N6-acetyllysine; by autocatalysis modification. Ser147 bears the Phosphoserine mark. The region spanning 175 to 452 (TRMKNIECIE…IDSKCLHFTP (278 aa)) is the MYST-type HAT domain. The C2HC MYST-type zinc-finger motif lies at 208-233 (LYLCEFCLKYGRSLKCLQRHLTKCDL). The residue at position 275 (Lys275) is an N6-acetyllysine; by autocatalysis. Positions 316-461 (ACILTLPPYQ…PKDWSKRGKW (146 aa)) are interaction with ATF2. Acetyl-CoA contacts are provided by residues 318-320 (ILT) and 325-331 (QRRGYGK). Glu351 (proton donor/acceptor) is an active-site residue. Positions 355 and 364 each coordinate acetyl-CoA. Residue Lys378 forms a Glycyl lysine isopeptide (Lys-Gly) (interchain with G-Cter in SUMO1); alternate linkage. Residue Lys378 forms a Glycyl lysine isopeptide (Lys-Gly) (interchain with G-Cter in SUMO2); alternate linkage. Lys399 participates in a covalent cross-link: Glycyl lysine isopeptide (Lys-Gly) (interchain with G-Cter in SUMO1).

The protein belongs to the MYST (SAS/MOZ) family. As to quaternary structure, component of the NuA4 histone acetyltransferase complex which contains the catalytic subunit KAT5/TIP60 and the subunits EP400, TRRAP/PAF400, BRD8/SMAP, EPC1, DMAP1/DNMAP1, RUVBL1/TIP49, RUVBL2, ING3, actin, ACTL6A/BAF53A, MORF4L1/MRG15, MORF4L2/MRGX, MRGBP, YEATS4/GAS41, VPS72/YL1 and MEAF6. KAT5/TIP60, EPC1, and ING3 together constitute a minimal HAT complex termed Piccolo NuA4. The NuA4 complex interacts with MYC. Interacts with ATM. Interacts with JADE1. Interacts with PLA2G4A/CPLA2, EDNRA and HDAC7. Interacts with the cytoplasmic tail of APP and APBB1/FE65. Interacts with TRIM24 and TRIM68. Forms a complex with SENP6 and UBE2I in response to UV irradiation. Identified in a complex with HINT1. Interacts with ATF2 and CUL3. Interacts with NR1D2 (via N-terminus). Component of a SWR1-like complex. Interacts with FOXP3. Interacts with ZBTB49. Interacts with SRF. Interacts with ATF3; promoting autoacetylation and deubiquitination by USP7. Interacts with EP300/p300; interaction promotes KAT5 autoacetylation. Interacts with PRKDC; interaction is impaired following KAT5 sumoylation. Interacts with GPR50. In terms of processing, phosphorylated on Ser-86 and Ser-90; enhanced during G2/M phase. The phosphorylated form has a higher activity. Phosphorylation at Ser-90 by CDK1 or CDK9 is a prerequisite for phosphorylation at Ser-86 by GSK3. Phosphorylation at Ser-86 by GSK3 (GSK3A or GSK3B) activates acetyltransferase and acyltransferase activities. Phosphorylation at Ser-90 by CDK9 promotes KAT5 recruitment to chromatin. Phosphorylation by VRK1 following DNA damage promotes KAT5 association with chromatin and histone acetyltransferase activity. Post-translationally, autoacetylated. Autoacetylation is required for histone acetyltransferase activity. Autoacetylation at Lys-275 is facilitated by interaction with EP300/p300: it prevents ubiquitination and subsequent degradation by the proteasome and promotes acetylation of target proteins. Deacetylated by HDAC3 and SIRT1. Deacetylation by HDAC3 promotes its ubiquitination and cytoplasmic localization. Sumoylated by UBE2I at Lys-378 and Lys-399, leading to increase of its histone acetyltransferase activity in UV-induced DNA damage response, as well as its translocation to nuclear bodies. Sumoylation with SUMO2 by PIAS4 at Lys-378 promotes repair of DNA double-strand breaks (DSBs) via homologous recombination (HR). Sumoylation by PIAS4 impairs interaction with PRKDC, inhibiting non-homologous end joining (NHEJ)-mediated repair of DSBs, thereby facilitating HR. Desumoylated by SENP3. In terms of processing, ubiquitinated by MDM2, leading to its proteasome-dependent degradation. Ubiquitination is prevented by autoacetylation at Lys-275. Ubiquitinated following deacetylation by HDAC3, leading to cytoplasmic localization. Deubiquitinated by USP7 following interaction with ATF3, promoting its stabilization.

The protein localises to the nucleus. Its subcellular location is the chromosome. The protein resides in the cytoplasm. It localises to the centromere. It is found in the kinetochore. The protein localises to the cytoskeleton. Its subcellular location is the spindle pole. The protein resides in the nucleolus. It localises to the perinuclear region. It carries out the reaction L-lysyl-[histone] + acetyl-CoA = N(6)-acetyl-L-lysyl-[histone] + CoA + H(+). The catalysed reaction is L-lysyl-[protein] + acetyl-CoA = N(6)-acetyl-L-lysyl-[protein] + CoA + H(+). The enzyme catalyses (2E)-butenoyl-CoA + L-lysyl-[protein] = N(6)-(2E)-butenoyl-L-lysyl-[protein] + CoA + H(+). It catalyses the reaction 2-hydroxyisobutanoyl-CoA + L-lysyl-[protein] = N(6)-(2-hydroxyisobutanoyl)-L-lysyl-[protein] + CoA + H(+). It carries out the reaction (S)-lactoyl-CoA + L-lysyl-[protein] = N(6)-[(S)-lactoyl]-L-lysyl-[protein] + CoA + H(+). Acyltransferase and acetyltransferase activities are activated by phosphorylation and autoacetylation. Autoacetylation activates the histone acetyltransferase activity. In terms of biological role, catalytic subunit of the NuA4 histone acetyltransferase complex, a multiprotein complex involved in transcriptional activation of select genes principally by acetylation of nucleosomal histones H2A and H4. Histone acetylation alters nucleosome-DNA interactions and promotes interaction of the modified histones with other proteins which positively regulate transcription. The NuA4 histone acetyltransferase complex is required for the activation of transcriptional programs associated with proto-oncogene mediated growth induction, tumor suppressor mediated growth arrest and replicative senescence, apoptosis, and DNA repair. The NuA4 complex plays a direct role in repair of DNA double-strand breaks (DSBs) by promoting homologous recombination (HR): the complex inhibits TP53BP1 binding to chromatin via MBTD1, which recognizes and binds histone H4 trimethylated at 'Lys-20' (H4K20me), and KAT5 that catalyzes acetylation of 'Lys-15' of histone H2A (H2AK15ac), thereby blocking the ubiquitination mark required for TP53BP1 localization at DNA breaks. Also involved in DSB repair by mediating acetylation of 'Lys-5' of histone H2AX (H2AXK5ac), promoting NBN/NBS1 assembly at the sites of DNA damage. The NuA4 complex plays a key role in hematopoietic stem cell maintenance and is required to maintain acetylated H2A.Z/H2AZ1 at MYC target genes. The NuA4 complex is also required for spermatid development by promoting acetylation of histones: histone hyperacetylation is required for histone replacement during the transition from round to elongating spermatids. Component of a SWR1-like complex that specifically mediates the removal of histone H2A.Z/H2AZ1 from the nucleosome. Also acetylates non-histone proteins, such as BMAL1, ATM, AURKB, CHKA, CGAS, ERCC4/XPF, LPIN1, TP53/p53, NDC80/HEC1, NR1D2, RAN, SOX4, FOXP3, SQSTM1, ULK1 and RUBCNL/Pacer. Directly acetylates and activates ATM. Promotes nucleotide excision repair (NER) by mediating acetylation of ERCC4/XPF, thereby promoting formation of the ERCC4-ERCC1 complex. Relieves NR1D2-mediated inhibition of APOC3 expression by acetylating NR1D2. Acts as a regulator of regulatory T-cells (Treg) by catalyzing FOXP3 acetylation, thereby promoting FOXP3 transcriptional repressor activity. Involved in skeletal myoblast differentiation by mediating acetylation of SOX4. Catalyzes acetylation of APBB1/FE65, increasing its transcription activator activity. Promotes transcription elongation during the activation phase of the circadian cycle by catalyzing acetylation of BMAL1, promoting elongation of circadian transcripts. Together with GSK3 (GSK3A or GSK3B), acts as a regulator of autophagy: phosphorylated at Ser-86 by GSK3 under starvation conditions, leading to activate acetyltransferase activity and promote acetylation of key autophagy regulators, such as ULK1 and RUBCNL/Pacer. Acts as a regulator of the cGAS-STING innate antiviral response by catalyzing acetylation the N-terminus of CGAS, thereby promoting CGAS DNA-binding and activation. Also regulates lipid metabolism by mediating acetylation of CHKA or LPIN1. Promotes lipolysis of lipid droplets following glucose deprivation by mediating acetylation of isoform 1 of CHKA, thereby promoting monomerization of CHKA and its conversion into a tyrosine-protein kinase. Acts as a regulator of fatty-acid-induced triacylglycerol synthesis by catalyzing acetylation of LPIN1, thereby promoting the synthesis of diacylglycerol. In addition to protein acetyltransferase, can use different acyl-CoA substrates, such as (2E)-butenoyl-CoA (crotonyl-CoA), S-lactoyl-CoA (lactyl-CoA) and 2-hydroxyisobutanoyl-CoA (2-hydroxyisobutyryl-CoA), and is able to mediate protein crotonylation, lactylation and 2-hydroxyisobutyrylation, respectively. Acts as a key regulator of chromosome segregation and kinetochore-microtubule attachment during mitosis by mediating acetylation or crotonylation of target proteins. Catalyzes acetylation of AURKB at kinetochores, increasing AURKB activity and promoting accurate chromosome segregation in mitosis. Acetylates RAN during mitosis, promoting microtubule assembly at mitotic chromosomes. Acetylates NDC80/HEC1 during mitosis, promoting robust kinetochore-microtubule attachment. Catalyzes crotonylation of MAPRE1/EB1, thereby ensuring accurate spindle positioning in mitosis. Catalyzes lactylation of NBN/NBS1 in response to DNA damage, thereby promoting DNA double-strand breaks (DSBs) via homologous recombination (HR). This is Histone acetyltransferase KAT5 from Pongo abelii (Sumatran orangutan).